Reading from the N-terminus, the 384-residue chain is Glucans biosynthesis protein C (384 aa).

10 helical membrane-spanning segments follow: residues 17 to 37, 54 to 74, 91 to 111, 140 to 160, 173 to 193, 212 to 232, 240 to 260, 274 to 294, 311 to 331, and 338 to 358; these read AWLM…THSW, FIHA…SYML, VGIP…ILLQ, LWFL…FTWF, AISL…YAAI, FIVM…LAFI, FTTP…AYLL, TESV…FSLG, ASLF…AYIT, and LIGF…LYEI.

The protein belongs to the acyltransferase 3 family. OpgC subfamily.

The protein resides in the cell membrane. It participates in glycan metabolism; osmoregulated periplasmic glucan (OPG) biosynthesis. Functionally, necessary for the succinyl substitution of periplasmic glucans. Could catalyze the transfer of succinyl residues from the cytoplasmic side of the membrane to the nascent glucan backbones on the periplasmic side of the membrane. This Salmonella agona (strain SL483) protein is Glucans biosynthesis protein C.